The chain runs to 221 residues: Small ribosomal subunit protein uS2 (221 aa).

This sequence belongs to the universal ribosomal protein uS2 family.

The sequence is that of Small ribosomal subunit protein uS2 from Methanococcus maripaludis (strain C6 / ATCC BAA-1332).